We begin with the raw amino-acid sequence, 85 residues long: Large ribosomal subunit protein bL27 (85 aa).

The tract at residues 1–21 (MAHKKAGGSTRNGRDSRGKRL) is disordered.

Belongs to the bacterial ribosomal protein bL27 family.

The protein is Large ribosomal subunit protein bL27 of Blochmanniella floridana.